We begin with the raw amino-acid sequence, 157 residues long: Snaclec A16 (157 aa).

An N-terminal signal peptide occupies residues 1–23 (MGRLISVSFGLLVVFLSLSGTGA). Disulfide bonds link Cys-27–Cys-38, Cys-55–Cys-149, and Cys-124–Cys-141. In terms of domain architecture, C-type lectin spans 34-150 (YEGHCYKVFN…CELAYHFICM (117 aa)).

The protein belongs to the snaclec family. As to quaternary structure, heterodimer; disulfide-linked. As to expression, expressed by the venom gland.

The protein resides in the secreted. Its function is as follows. Interferes with one step of hemostasis (modulation of platelet aggregation, or coagulation cascade, for example). The polypeptide is Snaclec A16 (Macrovipera lebetinus (Levantine viper)).